The chain runs to 297 residues: Cell division protein FtsX (297 aa).

The Cytoplasmic segment spans residues 1 to 24 (MKAKTLSRHLREGVKNLSRNGWMT). The helical transmembrane segment at 25-45 (FASVSAVTVTLLLVGVFLTAI) threads the bilayer. The Extracellular segment spans residues 46 to 171 (MNMNHFATKV…LFDTVKTGRN (126 aa)). Residues 172–192 (IGIVLIAGLLFTAMFLISNTI) traverse the membrane as a helical segment. Residues 193–219 (KITIYARSTEIEIMKLVGATNWFIRWP) lie on the Cytoplasmic side of the membrane. The chain crosses the membrane as a helical span at residues 220-240 (FLLEGLFLGVLGSIIPIGLIL). At 241–270 (VTYNSLQGMFNEKLGGTIFELLPYSPFVFQ) the chain is on the extracellular side. Residues 271-291 (LAGLLVLIGALIGMWGSVMSI) traverse the membrane as a helical segment. At 292–297 (RRFLKV) the chain is on the cytoplasmic side.

The protein belongs to the ABC-4 integral membrane protein family. FtsX subfamily. In terms of assembly, interacts with FtsE.

It localises to the cell membrane. In terms of biological role, part of the ABC transporter FtsEX involved in asymmetric cellular division facilitating the initiation of sporulation. The sequence is that of Cell division protein FtsX from Bacillus anthracis.